Reading from the N-terminus, the 684-residue chain is Ski-like protein (684 aa).

Glycyl lysine isopeptide (Lys-Gly) (interchain with G-Cter in SUMO2) cross-links involve residues K50 and K70. Residues 420 to 454 (SQSKELTKTEASKSISRQSEKAHSSGKLQKTVSYP) form a disordered region. Phosphoserine is present on S452. Glycyl lysine isopeptide (Lys-Gly) (interchain with G-Cter in SUMO2) cross-links involve residues K489 and K527. Residues 536-684 (RTYLKQQEKL…ILKSSKTAKE (149 aa)) are a coiled coil.

It belongs to the SKI family. As to quaternary structure, interacts with CPNE4 (via VWFA domain). Interacts with SMAD2, SMAD3 and RNF111. Isoform 1 interacts with WWP1. In terms of processing, ubiquitinated by RNF111 and ARK2C, promoting proteasomal degradation, leading to enhance the BMP-Smad signaling. In terms of tissue distribution, isoform SNON and isoform SNOA are widely expressed. Highest expression is found in skeletal muscle, followed by placenta and lung. Lowest expression in heart, brain and pancreas. Isoform SNOI expression is restricted to skeletal muscle.

Functionally, may have regulatory role in cell division or differentiation in response to extracellular signals. The chain is Ski-like protein (SKIL) from Homo sapiens (Human).